A 2376-amino-acid chain; its full sequence is Protein Ycf2 (2376 aa).

Disordered regions lie at residues 173 to 194 (SSQL…GTED), 226 to 256 (TEIE…EMNN), and 952 to 1011 (KRKK…KRKE). A compositionally biased stretch (low complexity) spans 235–245 (KGLSGSSSKSR). 2 stretches are compositionally biased toward basic and acidic residues: residues 246–255 (LFTEGEKEMN) and 960–1009 (KRKE…PEKR). An ATP-binding site is contributed by 1441 to 1448 (GSIGSGRS). Disordered regions lie at residues 1515-1534 (YEDR…DYEP), 1860-2046 (LVGS…LRPK), and 2112-2230 (PAEE…DGFS). Positions 1866 to 2025 (TEEEVEGTEE…GEGTEDEEGE (160 aa)) are enriched in acidic residues. Residues 2026–2038 (GTEKDSSQFDNDR) are compositionally biased toward basic and acidic residues. Acidic residues-rich tracts occupy residues 2112-2129 (PAEE…EALE) and 2136-2213 (GEEE…ENDS).

The protein belongs to the Ycf2 family.

The protein resides in the plastid. The protein localises to the chloroplast stroma. Functionally, probable ATPase of unknown function. Its presence in a non-photosynthetic plant (Epifagus virginiana) and experiments in tobacco indicate that it has an essential function which is probably not related to photosynthesis. The sequence is that of Protein Ycf2 from Oenothera glazioviana (Large-flowered evening primrose).